We begin with the raw amino-acid sequence, 454 residues long: Trigger factor (454 aa).

The PPIase FKBP-type domain occupies 169-261 (GDVAIADYEG…LKELKSRELP (93 aa)).

This sequence belongs to the FKBP-type PPIase family. Tig subfamily.

It is found in the cytoplasm. The enzyme catalyses [protein]-peptidylproline (omega=180) = [protein]-peptidylproline (omega=0). Its function is as follows. Involved in protein export. Acts as a chaperone by maintaining the newly synthesized protein in an open conformation. Functions as a peptidyl-prolyl cis-trans isomerase. The polypeptide is Trigger factor (Picosynechococcus sp. (strain ATCC 27264 / PCC 7002 / PR-6) (Agmenellum quadruplicatum)).